We begin with the raw amino-acid sequence, 401 residues long: Argininosuccinate synthase (401 aa).

Residues 10–18 (AYSGGLDTS) and alanine 37 contribute to the ATP site. Tyrosine 89 is an L-citrulline binding site. Glycine 119 contributes to the ATP binding site. L-aspartate-binding residues include threonine 121, asparagine 125, and aspartate 126. Asparagine 125 contacts L-citrulline. Residues arginine 129, serine 178, serine 187, glutamate 263, and tyrosine 275 each coordinate L-citrulline.

This sequence belongs to the argininosuccinate synthase family. Type 1 subfamily. In terms of assembly, homotetramer.

The protein resides in the cytoplasm. It catalyses the reaction L-citrulline + L-aspartate + ATP = 2-(N(omega)-L-arginino)succinate + AMP + diphosphate + H(+). It participates in amino-acid biosynthesis; L-arginine biosynthesis; L-arginine from L-ornithine and carbamoyl phosphate: step 2/3. This Buchnera aphidicola subsp. Schizaphis graminum (strain Sg) protein is Argininosuccinate synthase.